The following is a 327-amino-acid chain: Zinc transport protein ZntB (327 aa).

Over 1–271 the chain is Cytoplasmic; the sequence is MESFAGKELQ…AMNRRTYTMS (271 aa). A helical transmembrane segment spans residues 272–292; sequence LLAMVFLPTTFLTGLFGVNLG. Residues 293 to 300 lie on the Periplasmic side of the membrane; sequence GIPGGDAP. Residues 301 to 321 traverse the membrane as a helical segment; the sequence is FGFFTFCLMLVILVGGVAWWL. Residues 322–327 are Cytoplasmic-facing; sequence KRSKWL.

This sequence belongs to the CorA metal ion transporter (MIT) (TC 1.A.35) family.

It is found in the cell inner membrane. It catalyses the reaction Zn(2+)(out) + H(+)(out) = Zn(2+)(in) + H(+)(in). Its function is as follows. Zinc transporter. Acts as a Zn(2+):proton symporter, which likely mediates zinc ion uptake. The polypeptide is Zinc transport protein ZntB (Pectobacterium carotovorum subsp. carotovorum (strain PC1)).